A 612-amino-acid chain; its full sequence is Dihydroxy-acid dehydratase (612 aa).

Aspartate 81 is a Mg(2+) binding site. A [2Fe-2S] cluster-binding site is contributed by cysteine 122. Residues aspartate 123 and lysine 124 each coordinate Mg(2+). Residue lysine 124 is modified to N6-carboxylysine. Cysteine 193 is a binding site for [2Fe-2S] cluster. Glutamate 489 contacts Mg(2+). The Proton acceptor role is filled by serine 515.

The protein belongs to the IlvD/Edd family. Homodimer. It depends on [2Fe-2S] cluster as a cofactor. Mg(2+) is required as a cofactor.

It catalyses the reaction (2R)-2,3-dihydroxy-3-methylbutanoate = 3-methyl-2-oxobutanoate + H2O. The catalysed reaction is (2R,3R)-2,3-dihydroxy-3-methylpentanoate = (S)-3-methyl-2-oxopentanoate + H2O. It participates in amino-acid biosynthesis; L-isoleucine biosynthesis; L-isoleucine from 2-oxobutanoate: step 3/4. Its pathway is amino-acid biosynthesis; L-valine biosynthesis; L-valine from pyruvate: step 3/4. Functionally, functions in the biosynthesis of branched-chain amino acids. Catalyzes the dehydration of (2R,3R)-2,3-dihydroxy-3-methylpentanoate (2,3-dihydroxy-3-methylvalerate) into 2-oxo-3-methylpentanoate (2-oxo-3-methylvalerate) and of (2R)-2,3-dihydroxy-3-methylbutanoate (2,3-dihydroxyisovalerate) into 2-oxo-3-methylbutanoate (2-oxoisovalerate), the penultimate precursor to L-isoleucine and L-valine, respectively. This chain is Dihydroxy-acid dehydratase, found in Teredinibacter turnerae (strain ATCC 39867 / T7901).